A 405-amino-acid chain; its full sequence is Nodal homolog 2-A (405 aa).

An N-terminal signal peptide occupies residues 1-18; it reads MASLGVILFFVIASLIHG. The propeptide occupies 19–282; sequence KPIHSERKAA…RVTDTRRPRR (264 aa). Residues N71, N172, and N343 are each glycosylated (N-linked (GlcNAc...) asparagine). Intrachain disulfides connect C305-C371, C334-C402, and C338-C404.

Belongs to the TGF-beta family. As to quaternary structure, homodimer; disulfide-linked. Forms heterodimers with the TGF-beta family member derriere. Interacts with tsku; enhances nodal2 activity. In terms of tissue distribution, first localized to the vegetal region of the blastula. Just prior to gastrulation (stage 10), this expression disappears and instead becomes localized to the dorsal marginal zone, with enrichment in the organizer.

Its subcellular location is the secreted. In terms of biological role, cooperation and regulatory loops of multiple nodals are essential for mesendoderm patterning in early embryos. Essential for mesoderm formation and axial patterning during embryonic development. Activates the activin-like signaling pathway to induce dorsal and ventral mesoderm in animal cap ectoderm. In addition, also dorsalizes ventral marginal zone (VMZ) tissues during gastrulation. Induces muscle actin. Appears to act as both a short-range and long-range morphogen. The unprocessed protein inhibits bmp- and wnt-signaling. This Xenopus laevis (African clawed frog) protein is Nodal homolog 2-A (nodal2-a).